Consider the following 334-residue polypeptide: N-acetyl-gamma-glutamyl-phosphate reductase (334 aa).

Cysteine 154 is an active-site residue.

The protein belongs to the NAGSA dehydrogenase family. Type 1 subfamily.

Its subcellular location is the cytoplasm. The enzyme catalyses N-acetyl-L-glutamate 5-semialdehyde + phosphate + NADP(+) = N-acetyl-L-glutamyl 5-phosphate + NADPH + H(+). It participates in amino-acid biosynthesis; L-arginine biosynthesis; N(2)-acetyl-L-ornithine from L-glutamate: step 3/4. In terms of biological role, catalyzes the NADPH-dependent reduction of N-acetyl-5-glutamyl phosphate to yield N-acetyl-L-glutamate 5-semialdehyde. The sequence is that of N-acetyl-gamma-glutamyl-phosphate reductase from Escherichia coli O6:H1 (strain CFT073 / ATCC 700928 / UPEC).